Reading from the N-terminus, the 130-residue chain is MEKLEKTLEEWRSMLDPEQYNVCRLKGTERPFSGKYNGTKTDGVYHCICCNEPLFDSKAKFDSGCGWPSFYEPIADSAMVEIRDMSHGMIRTEVVCAKCDAHLGHVFPDGPPPTGLRYCINSVCLDLVPR.

The 123-residue stretch at 8 to 130 (LEEWRSMLDP…NSVCLDLVPR (123 aa)) folds into the MsrB domain. Zn(2+) is bound by residues Cys-47, Cys-50, Cys-96, and Cys-99. The active-site Nucleophile is the Cys-119.

This sequence belongs to the MsrB Met sulfoxide reductase family. Zn(2+) serves as cofactor.

It catalyses the reaction L-methionyl-[protein] + [thioredoxin]-disulfide + H2O = L-methionyl-(R)-S-oxide-[protein] + [thioredoxin]-dithiol. This is Peptide methionine sulfoxide reductase MsrB from Pseudomonas fluorescens (strain ATCC BAA-477 / NRRL B-23932 / Pf-5).